We begin with the raw amino-acid sequence, 322 residues long: Homoserine kinase (322 aa).

The protein belongs to the pseudomonas-type ThrB family.

It catalyses the reaction L-homoserine + ATP = O-phospho-L-homoserine + ADP + H(+). It functions in the pathway amino-acid biosynthesis; L-threonine biosynthesis; L-threonine from L-aspartate: step 4/5. This is Homoserine kinase from Janthinobacterium sp. (strain Marseille) (Minibacterium massiliensis).